Consider the following 131-residue polypeptide: Small ribosomal subunit protein bS6 (131 aa).

Residues 98–131 form a disordered region; sequence EASPMVKAKDERRERRDDFANETADDADAGDSEE. A compositionally biased stretch (basic and acidic residues) spans 104–116; that stretch reads KAKDERRERRDDF. Residues 120 to 131 show a composition bias toward acidic residues; the sequence is TADDADAGDSEE.

The protein belongs to the bacterial ribosomal protein bS6 family.

In terms of biological role, binds together with bS18 to 16S ribosomal RNA. This chain is Small ribosomal subunit protein bS6, found in Citrobacter koseri (strain ATCC BAA-895 / CDC 4225-83 / SGSC4696).